Here is a 218-residue protein sequence, read N- to C-terminus: Glutathione S-transferase D7 (218 aa).

The 82-residue stretch at 1 to 82 (MTPVLYYLPP…YLVSAYGKDE (82 aa)) folds into the GST N-terminal domain. Glutathione is bound by residues Ser11, 52 to 54 (HCI), and 66 to 68 (ESR). Residues 88–207 (DFRSRAIVDQ…KEINETGAET (120 aa)) form the GST C-terminal domain.

Belongs to the GST superfamily. Theta family. Homodimer.

The enzyme catalyses RX + glutathione = an S-substituted glutathione + a halide anion + H(+). Functionally, conjugation of reduced glutathione to a wide number of exogenous and endogenous hydrophobic electrophiles. This is Glutathione S-transferase D7 from Anopheles gambiae (African malaria mosquito).